The following is a 155-amino-acid chain: Ribonuclease HI (155 aa).

One can recognise an RNase H type-1 domain in the interval 1-142 (MTKQVEIFTD…CDELARAAAE (142 aa)). Residues Asp10, Glu48, Asp70, and Asp134 each coordinate Mg(2+).

Belongs to the RNase H family. As to quaternary structure, monomer. It depends on Mg(2+) as a cofactor.

It localises to the cytoplasm. It catalyses the reaction Endonucleolytic cleavage to 5'-phosphomonoester.. Functionally, endonuclease that specifically degrades the RNA of RNA-DNA hybrids. This is Ribonuclease HI from Vibrio vulnificus (strain CMCP6).